A 128-amino-acid chain; its full sequence is Small ribosomal subunit protein bS6 (128 aa).

It belongs to the bacterial ribosomal protein bS6 family.

Binds together with bS18 to 16S ribosomal RNA. This Thermotoga sp. (strain RQ2) protein is Small ribosomal subunit protein bS6.